We begin with the raw amino-acid sequence, 457 residues long: Transmembrane protein 143 (457 aa).

Helical transmembrane passes span 264-284 (ILNV…GMVV) and 285-305 (LSDL…FMGL). S316 carries the post-translational modification Phosphoserine. Positions 429–439 (LSSPKSAPSDD) are enriched in polar residues. A disordered region spans residues 429–457 (LSSPKSAPSDDNSLEKPLGPAQPSHLVGN).

Its subcellular location is the membrane. This chain is Transmembrane protein 143 (TMEM143), found in Bos taurus (Bovine).